Consider the following 117-residue polypeptide: Large ribosomal subunit protein uL18 (117 aa).

The protein belongs to the universal ribosomal protein uL18 family. In terms of assembly, part of the 50S ribosomal subunit; part of the 5S rRNA/L5/L18/L25 subcomplex. Contacts the 5S and 23S rRNAs.

This is one of the proteins that bind and probably mediate the attachment of the 5S RNA into the large ribosomal subunit, where it forms part of the central protuberance. This chain is Large ribosomal subunit protein uL18, found in Blochmanniella floridana.